The sequence spans 429 residues: Histidine--tRNA ligase (429 aa).

Belongs to the class-II aminoacyl-tRNA synthetase family. In terms of assembly, homodimer.

Its subcellular location is the cytoplasm. The catalysed reaction is tRNA(His) + L-histidine + ATP = L-histidyl-tRNA(His) + AMP + diphosphate + H(+). This is Histidine--tRNA ligase from Streptococcus pneumoniae serotype 2 (strain D39 / NCTC 7466).